A 453-amino-acid polypeptide reads, in one-letter code: Bifunctional protein GlmU (453 aa).

Positions 1–226 are pyrophosphorylase; it reads MKFSAVILAA…AIEVEGVNDR (226 aa). UDP-N-acetyl-alpha-D-glucosamine contacts are provided by residues 8-11, Lys22, Gln73, 78-79, 100-102, Gly137, Glu151, Asn166, and Asn224; these read LAAG, GT, and YGD. Asp102 contributes to the Mg(2+) binding site. Residue Asn224 participates in Mg(2+) binding. Positions 227-247 are linker; the sequence is AQLARLERAFQSMQAQKLLEQ. The N-acetyltransferase stretch occupies residues 248 to 453; sequence GVMLRDPARF…TGWQRPVKQK (206 aa). Residues Arg330 and Lys348 each contribute to the UDP-N-acetyl-alpha-D-glucosamine site. The active-site Proton acceptor is the His360. The UDP-N-acetyl-alpha-D-glucosamine site is built by Tyr363 and Asn374. Acetyl-CoA contacts are provided by residues Ala377, 383-384, Ser402, Ala420, and Arg437; that span reads NY.

It in the N-terminal section; belongs to the N-acetylglucosamine-1-phosphate uridyltransferase family. The protein in the C-terminal section; belongs to the transferase hexapeptide repeat family. Homotrimer. Mg(2+) serves as cofactor.

The protein resides in the cytoplasm. It carries out the reaction alpha-D-glucosamine 1-phosphate + acetyl-CoA = N-acetyl-alpha-D-glucosamine 1-phosphate + CoA + H(+). It catalyses the reaction N-acetyl-alpha-D-glucosamine 1-phosphate + UTP + H(+) = UDP-N-acetyl-alpha-D-glucosamine + diphosphate. It participates in nucleotide-sugar biosynthesis; UDP-N-acetyl-alpha-D-glucosamine biosynthesis; N-acetyl-alpha-D-glucosamine 1-phosphate from alpha-D-glucosamine 6-phosphate (route II): step 2/2. It functions in the pathway nucleotide-sugar biosynthesis; UDP-N-acetyl-alpha-D-glucosamine biosynthesis; UDP-N-acetyl-alpha-D-glucosamine from N-acetyl-alpha-D-glucosamine 1-phosphate: step 1/1. Its pathway is bacterial outer membrane biogenesis; LPS lipid A biosynthesis. In terms of biological role, catalyzes the last two sequential reactions in the de novo biosynthetic pathway for UDP-N-acetylglucosamine (UDP-GlcNAc). The C-terminal domain catalyzes the transfer of acetyl group from acetyl coenzyme A to glucosamine-1-phosphate (GlcN-1-P) to produce N-acetylglucosamine-1-phosphate (GlcNAc-1-P), which is converted into UDP-GlcNAc by the transfer of uridine 5-monophosphate (from uridine 5-triphosphate), a reaction catalyzed by the N-terminal domain. This is Bifunctional protein GlmU from Vibrio campbellii (strain ATCC BAA-1116).